A 211-amino-acid polypeptide reads, in one-letter code: ATP-dependent Clp protease proteolytic subunit 1 (211 aa).

Serine 107 functions as the Nucleophile in the catalytic mechanism. The active site involves histidine 132.

Belongs to the peptidase S14 family. Fourteen ClpP subunits assemble into 2 heptameric rings which stack back to back to give a disk-like structure with a central cavity, resembling the structure of eukaryotic proteasomes.

The protein localises to the cytoplasm. It catalyses the reaction Hydrolysis of proteins to small peptides in the presence of ATP and magnesium. alpha-casein is the usual test substrate. In the absence of ATP, only oligopeptides shorter than five residues are hydrolyzed (such as succinyl-Leu-Tyr-|-NHMec, and Leu-Tyr-Leu-|-Tyr-Trp, in which cleavage of the -Tyr-|-Leu- and -Tyr-|-Trp bonds also occurs).. In terms of biological role, cleaves peptides in various proteins in a process that requires ATP hydrolysis. Has a chymotrypsin-like activity. Plays a major role in the degradation of misfolded proteins. This is ATP-dependent Clp protease proteolytic subunit 1 from Mycolicibacterium paratuberculosis (strain ATCC BAA-968 / K-10) (Mycobacterium paratuberculosis).